A 267-amino-acid polypeptide reads, in one-letter code: Alkaline ceramidase 3 (267 aa).

Residues 1–33 lie on the Cytoplasmic side of the membrane; sequence MAPAADREGYWGPTTSTLDWCEENYSVTWYIAE. Ca(2+)-binding residues include D19, W20, E22, N24, and E33. The chain crosses the membrane as a helical span at residues 34 to 55; that stretch reads FWNTVSNLIMIIPPMFGAVQSV. At 56–61 the chain is on the lumenal side; that stretch reads RDGLEK. The chain crosses the membrane as a helical span at residues 62–82; the sequence is RYIASYLALTVVGMGSWCFHM. H81 contacts Zn(2+). The Cytoplasmic portion of the chain corresponds to 83 to 87; the sequence is TLKYE. A helical transmembrane segment spans residues 88–108; sequence MQLLDELPMIYSCCIFVYCMF. Over 109 to 118 the chain is Lumenal; that stretch reads ECFKIKNSVN. The chain crosses the membrane as a helical span at residues 119 to 139; sequence YHLLFTLVLFSLIVTTVYLKV. Residues 140–141 lie on the Cytoplasmic side of the membrane; the sequence is KE. Residues 142–162 form a helical membrane-spanning segment; it reads PIFHQVMYGMLVFTLVLRSIY. Over 163-173 the chain is Lumenal; it reads IVTWVYPWLRG. Residues 174–194 traverse the membrane as a helical segment; the sequence is LGYTSLGIFLLGFLFWNIDNI. Over 195 to 215 the chain is Cytoplasmic; it reads FCESLRNFRKKVPPIIGITTQ. The helical transmembrane segment at 216-236 threads the bilayer; the sequence is FHAWWHILTGLGSYLHILFSL. Zn(2+) is bound by residues H217 and H221. The Lumenal portion of the chain corresponds to 237 to 267; the sequence is YTRTLYLRYRPKVKFLFGIWPVILFEPLRKH.

It belongs to the alkaline ceramidase family. Requires Zn(2+) as cofactor. Ubiquitously expressed. Highly expressed in placenta. Expressed in erythrocytes.

Its subcellular location is the endoplasmic reticulum membrane. It localises to the golgi apparatus membrane. It catalyses the reaction an N-acyl-(4R)-4-hydroxysphinganine + H2O = (4R)-hydroxysphinganine + a fatty acid. The catalysed reaction is N-(5Z,8Z,11Z,14Z-eicosatetraenoyl)-sphing-4-enine + H2O = sphing-4-enine + (5Z,8Z,11Z,14Z)-eicosatetraenoate. The enzyme catalyses N-(5Z,8Z,11Z,14Z-eicosatetraenoyl)-sphinganine + H2O = sphinganine + (5Z,8Z,11Z,14Z)-eicosatetraenoate. It carries out the reaction N-(5Z,8Z,11Z,14Z-eicosatetraenoyl)-(4R)-hydroxysphinganine + H2O = (4R)-hydroxysphinganine + (5Z,8Z,11Z,14Z)-eicosatetraenoate. It catalyses the reaction N-(11Z-eicosenoyl)-sphing-4-enine + H2O = (11Z)-eicosenoate + sphing-4-enine. The catalysed reaction is N-(11Z-eicosenoyl)-sphinganine + H2O = (11Z)-eicosenoate + sphinganine. The enzyme catalyses N-(11Z-eicosenoyl)-(4R)-hydroxysphinganine + H2O = (11Z)-eicosenoate + (4R)-hydroxysphinganine. It carries out the reaction N-(9Z-octadecenoyl)-sphing-4-enine + H2O = sphing-4-enine + (9Z)-octadecenoate. It catalyses the reaction N-(9Z-octadecenoyl)-sphinganine + H2O = sphinganine + (9Z)-octadecenoate. The catalysed reaction is N-(9Z-octadecenoyl)-(4R)-hydroxysphinganine + H2O = (4R)-hydroxysphinganine + (9Z)-octadecenoate. The enzyme catalyses an N-acylsphing-4-enine + H2O = sphing-4-enine + a fatty acid. It carries out the reaction an N-acylsphinganine + H2O = sphinganine + a fatty acid. It participates in lipid metabolism; sphingolipid metabolism. With respect to regulation, activated by 5 mM Ca(2+) and inhibited by 5 mM Zn(2+). Functionally, endoplasmic reticulum and Golgi ceramidase that catalyzes the hydrolysis of unsaturated long-chain C18:1-, C20:1- and C20:4-ceramides, dihydroceramides and phytoceramides into sphingoid bases like sphingosine and free fatty acids at alkaline pH. Ceramides, sphingosine, and its phosphorylated form sphingosine-1-phosphate are bioactive lipids that mediate cellular signaling pathways regulating several biological processes including cell proliferation, apoptosis and differentiation. Controls the generation of sphingosine in erythrocytes, and thereby sphingosine-1-phosphate in plasma. Through the regulation of ceramides and sphingosine-1-phosphate homeostasis in the brain may play a role in neurons survival and function. By regulating the levels of pro-inflammatory ceramides in immune cells and tissues, may modulate the inflammatory response. In Homo sapiens (Human), this protein is Alkaline ceramidase 3 (ACER3).